The following is a 512-amino-acid chain: MVATIMQTTTTVLTTVAAMSTTLASNYISSQASSSTSVTTVTTIATSIRSTPSNLLFSNVAAQPKSSSASTIGLSIGLPIGIFCFGLLILLCYFYLKRNSVSISNPPMSATIPREEEYCRRTNWFSRLFWQSKCEDQNSYSNRDIEKYNDTQWTSGDNMSSKIQYKISKPIIPQHILTPKKTVKNPYAWSGKNISLDPKVNEMEEEKVVDAFLYTKPPNIVHIESSMPSYNDLPSQKTVSSKKTALKTSEKWSYESPLSRWFLRGSTYFKDYGLSKTSLKTPTGAPQLKQMKMLSRISKGYFNESDIMPDERSPILEYNNTPLDANDSVNNLGNTTPDSQITSYRNNNIDLITARPHSVIYGTTAQQTLETNFNDHHDCNKSTEKHELIIPTPSKPLKKRKKRRQSKMYQHLQHLSRSKPLPLTPNSKYNGEASVQLGKTYTVIQDYEPRLTDEIRISLGEKVKILATHTDGWCLVEKCNTQKGSIHVSVDDKRYLNEDRGIVPGDCLQEYD.

The helical transmembrane segment at 72–96 (IGLSIGLPIGIFCFGLLILLCYFYL) threads the bilayer. A hydrophilic region spans residues 97 to 512 (KRNSVSISNP…VPGDCLQEYD (416 aa)). Position 178 is a phosphothreonine (Thr-178). Residues Ser-190 and Ser-256 each carry the phosphoserine modification. Phosphothreonine occurs at positions 281 and 424. An SH3 domain is found at 436-512 (QLGKTYTVIQ…VPGDCLQEYD (77 aa)).

O-glycosylated.

The protein resides in the membrane. In terms of biological role, required for cell fusion. Negatively regulates Sho1p signaling to ensure efficient cell fusion. Its function is as follows. Interacts with SHO1. The polypeptide is Nuclear fusion protein FUS1 (FUS1) (Saccharomyces cerevisiae (strain ATCC 204508 / S288c) (Baker's yeast)).